The chain runs to 292 residues: UPF0696 protein C11orf68 (292 aa).

The segment covering 1-11 has biased composition (low complexity); that stretch reads MAAAAAAAVAG. The interval 1–60 is disordered; that stretch reads MAAAAAAAVAGVGRGGGGAEPRQERSRARGWAGVERSEGRRMEPGEELEEEGSPGGREDG. The residue at position 29 (R29) is an Omega-N-methylarginine. The span at 35–44 shows a compositional bias: basic and acidic residues; that stretch reads ERSEGRRMEP.

This sequence belongs to the UPF0696 family.

The protein is UPF0696 protein C11orf68 (C11orf68) of Homo sapiens (Human).